Reading from the N-terminus, the 327-residue chain is MQQLTEIVEQALVIIDQASDLKALDDIRVDYLGKKGKITDMMKMMGSLSPEEKPAFGQAVNDAKQAIQQKLTERIDGLKSAELEAKLIAEKIDVTLPGRTIDIGGLHPVTRTIERIETFFGELGFSVKQGPEIEDDFHNFDALNISEHHPARADHDTFYFNPKLMLRTQTSGVQIRTMETEKPPLRIISPGRVYRNDYDQTHTPMFHQVEGLLVDENVNFAELKGVLHDFLRNFFEEDLQVRFRPSYFPFTEPSAEVDVMGKNGKWLEVLGCGMVHPNVLRSVGIDPEKYSGFAFGMGVERLTMLRYGVNDLRAFFENDLRFLKQFK.

Residue Glu252 participates in Mg(2+) binding.

It belongs to the class-II aminoacyl-tRNA synthetase family. Phe-tRNA synthetase alpha subunit type 1 subfamily. In terms of assembly, tetramer of two alpha and two beta subunits. It depends on Mg(2+) as a cofactor.

It is found in the cytoplasm. The enzyme catalyses tRNA(Phe) + L-phenylalanine + ATP = L-phenylalanyl-tRNA(Phe) + AMP + diphosphate + H(+). The sequence is that of Phenylalanine--tRNA ligase alpha subunit from Shewanella sp. (strain MR-7).